The sequence spans 506 residues: Ribose import ATP-binding protein RbsA 2 (506 aa).

ABC transporter domains lie at 5-241 (LRLS…VGRR) and 251-498 (VRAA…TAGT). 37-44 (GENGAGKS) lines the ATP pocket.

The protein belongs to the ABC transporter superfamily. Ribose importer (TC 3.A.1.2.1) family. As to quaternary structure, the complex is composed of an ATP-binding protein (RbsA), two transmembrane proteins (RbsC) and a solute-binding protein (RbsB).

The protein localises to the cell inner membrane. The catalysed reaction is D-ribose(out) + ATP + H2O = D-ribose(in) + ADP + phosphate + H(+). Its function is as follows. Part of the ABC transporter complex RbsABC involved in ribose import. Responsible for energy coupling to the transport system. This chain is Ribose import ATP-binding protein RbsA 2, found in Burkholderia ambifaria (strain ATCC BAA-244 / DSM 16087 / CCUG 44356 / LMG 19182 / AMMD) (Burkholderia cepacia (strain AMMD)).